Consider the following 190-residue polypeptide: Anthranilate synthase component II (190 aa).

One can recognise a Glutamine amidotransferase type-1 domain in the interval 1 to 190 (MILIIDNYDS…ENFCTGIAKA (190 aa)). An L-glutamine-binding site is contributed by 51-53 (GPG). The active-site Nucleophile; for GATase activity is cysteine 76. L-glutamine is bound by residues glutamine 80 and 126-127 (SL). Active-site residues include histidine 167 and glutamate 169.

Tetramer of two components I and two components II.

It carries out the reaction chorismate + L-glutamine = anthranilate + pyruvate + L-glutamate + H(+). It participates in amino-acid biosynthesis; L-tryptophan biosynthesis; L-tryptophan from chorismate: step 1/5. This chain is Anthranilate synthase component II (trpG2), found in Haloarcula marismortui (strain ATCC 43049 / DSM 3752 / JCM 8966 / VKM B-1809) (Halobacterium marismortui).